A 263-amino-acid chain; its full sequence is Dermonecrotic toxin SpaSicTox-betaIF1 (263 aa).

Mg(2+) contacts are provided by Glu15 and Asp17. His31 (nucleophile) is an active-site residue. Intrachain disulfides connect Cys35–Cys41 and Cys37–Cys179. Residue Asp75 participates in Mg(2+) binding.

It belongs to the arthropod phospholipase D family. Class II subfamily. Mg(2+) serves as cofactor. As to expression, expressed by the venom gland.

The protein resides in the secreted. The catalysed reaction is an N-(acyl)-sphingosylphosphocholine = an N-(acyl)-sphingosyl-1,3-cyclic phosphate + choline. It carries out the reaction an N-(acyl)-sphingosylphosphoethanolamine = an N-(acyl)-sphingosyl-1,3-cyclic phosphate + ethanolamine. It catalyses the reaction a 1-acyl-sn-glycero-3-phosphocholine = a 1-acyl-sn-glycero-2,3-cyclic phosphate + choline. The enzyme catalyses a 1-acyl-sn-glycero-3-phosphoethanolamine = a 1-acyl-sn-glycero-2,3-cyclic phosphate + ethanolamine. In terms of biological role, dermonecrotic toxins cleave the phosphodiester linkage between the phosphate and headgroup of certain phospholipids (sphingolipid and lysolipid substrates), forming an alcohol (often choline) and a cyclic phosphate. This toxin acts on sphingomyelin (SM). It may also act on ceramide phosphoethanolamine (CPE), lysophosphatidylcholine (LPC) and lysophosphatidylethanolamine (LPE), but not on lysophosphatidylserine (LPS), and lysophosphatidylglycerol (LPG). It acts by transphosphatidylation, releasing exclusively cyclic phosphate products as second products. Induces dermonecrosis, hemolysis, increased vascular permeability, edema, inflammatory response, and platelet aggregation. In Sicarius patagonicus (Six-eyed sand spider), this protein is Dermonecrotic toxin SpaSicTox-betaIF1.